The chain runs to 100 residues: Small ribosomal subunit protein uS14 (100 aa).

This sequence belongs to the universal ribosomal protein uS14 family. Part of the 30S ribosomal subunit. Contacts proteins S3 and S10.

Functionally, binds 16S rRNA, required for the assembly of 30S particles and may also be responsible for determining the conformation of the 16S rRNA at the A site. The sequence is that of Small ribosomal subunit protein uS14 from Rippkaea orientalis (strain PCC 8801 / RF-1) (Cyanothece sp. (strain PCC 8801)).